The following is a 162-amino-acid chain: Inorganic pyrophosphatase (162 aa).

Glutamate 8 provides a ligand contact to Mg(2+). Residues lysine 16, arginine 30, and tyrosine 42 each contribute to the substrate site. Mg(2+)-binding residues include aspartate 52, aspartate 57, aspartate 84, and aspartate 89. Aspartate 89 acts as the Proton acceptor in catalysis. Tyrosine 126 contacts substrate.

It belongs to the PPase family. Homohexamer. It depends on Mg(2+) as a cofactor.

The protein resides in the cytoplasm. The enzyme catalyses diphosphate + H2O = 2 phosphate + H(+). Its function is as follows. Catalyzes the hydrolysis of inorganic pyrophosphate (PPi) forming two phosphate ions. This is Inorganic pyrophosphatase from Mycobacterium leprae (strain TN).